The sequence spans 95 residues: ESAT-6-like protein EsxH (95 aa).

The protein belongs to the WXG100 family. ESAT-6 subfamily. In terms of assembly, forms a tight 1:1 complex with EsxG.

The protein localises to the secreted. This Mycolicibacterium smegmatis (strain ATCC 700084 / mc(2)155) (Mycobacterium smegmatis) protein is ESAT-6-like protein EsxH.